The chain runs to 150 residues: Small ribosomal subunit protein uS9 (150 aa).

It belongs to the universal ribosomal protein uS9 family.

This chain is Small ribosomal subunit protein uS9, found in Mycolicibacterium smegmatis (strain ATCC 700084 / mc(2)155) (Mycobacterium smegmatis).